Here is a 187-residue protein sequence, read N- to C-terminus: Adenylate kinase (187 aa).

Residue 10 to 15 (GSGKGT) coordinates ATP. The segment at 30-59 (STGDLLRSEVVAGTPLGLQAKQVMAQGDLV) is NMP. AMP-binding positions include T31, R36, 57–59 (DLV), 85–88 (GYPR), and Q92. Positions 126-136 (GRAQAEGREDD) are LID. R127 is a binding site for ATP. 2 residues coordinate AMP: R133 and R144. An ATP-binding site is contributed by G172.

This sequence belongs to the adenylate kinase family. Monomer.

The protein localises to the cytoplasm. It catalyses the reaction AMP + ATP = 2 ADP. It functions in the pathway purine metabolism; AMP biosynthesis via salvage pathway; AMP from ADP: step 1/1. Its function is as follows. Catalyzes the reversible transfer of the terminal phosphate group between ATP and AMP. Plays an important role in cellular energy homeostasis and in adenine nucleotide metabolism. The sequence is that of Adenylate kinase from Xylella fastidiosa (strain M23).